A 377-amino-acid polypeptide reads, in one-letter code: uncharacterized protein (377 aa).

The next 7 helical transmembrane spans lie at 21-41, 66-86, 163-183, 197-217, 236-256, 292-312, and 339-359; these read WLLA…LVLF, LVTF…FGLG, IGVL…GIVL, AILF…IAII, FYMG…YHIF, VNLI…FLIL, and IYFL…ELLF.

It is found in the cell membrane. This is an uncharacterized protein from Mycoplasma pneumoniae (strain ATCC 29342 / M129 / Subtype 1) (Mycoplasmoides pneumoniae).